The following is a 314-amino-acid chain: uncharacterized protein (314 aa).

This is an uncharacterized protein from Methanocaldococcus jannaschii (strain ATCC 43067 / DSM 2661 / JAL-1 / JCM 10045 / NBRC 100440) (Methanococcus jannaschii).